Reading from the N-terminus, the 140-residue chain is Ribosome-binding factor A (140 aa).

The tract at residues 121 to 140 (KAAEHGREDEELDDTEQDDK) is disordered. The span at 129-140 (DEELDDTEQDDK) shows a compositional bias: acidic residues.

It belongs to the RbfA family. Monomer. Binds 30S ribosomal subunits, but not 50S ribosomal subunits or 70S ribosomes.

It is found in the cytoplasm. One of several proteins that assist in the late maturation steps of the functional core of the 30S ribosomal subunit. Associates with free 30S ribosomal subunits (but not with 30S subunits that are part of 70S ribosomes or polysomes). Required for efficient processing of 16S rRNA. May interact with the 5'-terminal helix region of 16S rRNA. This is Ribosome-binding factor A from Shewanella loihica (strain ATCC BAA-1088 / PV-4).